The primary structure comprises 300 residues: Homoserine kinase (300 aa).

86–96 (PVARGLGSSAT) is a binding site for ATP.

The protein belongs to the GHMP kinase family. Homoserine kinase subfamily.

Its subcellular location is the cytoplasm. It catalyses the reaction L-homoserine + ATP = O-phospho-L-homoserine + ADP + H(+). The protein operates within amino-acid biosynthesis; L-threonine biosynthesis; L-threonine from L-aspartate: step 4/5. Functionally, catalyzes the ATP-dependent phosphorylation of L-homoserine to L-homoserine phosphate. In Persephonella marina (strain DSM 14350 / EX-H1), this protein is Homoserine kinase.